Reading from the N-terminus, the 380-residue chain is Chaperone protein DnaJ (380 aa).

A J domain is found at 5-70; it reads DYYEALGVAR…RKRTAYDQFG (66 aa). The CR-type zinc-finger motif lies at 137 to 215; sequence GTTAKIRIPT…CRGEGRVREH (79 aa). The Zn(2+) site is built by Cys-150, Cys-153, Cys-167, Cys-170, Cys-189, Cys-192, Cys-203, and Cys-206. 4 CXXCXGXG motif repeats span residues 150 to 157, 167 to 174, 189 to 196, and 203 to 210; these read CKACEGSG, CPTCGGHG, CPRCHGSG, and CSTCRGEG. The segment at 222–247 is disordered; that stretch reads IPPGVDTGDRIRLTGEGEAGESGGPP.

It belongs to the DnaJ family. In terms of assembly, homodimer. Zn(2+) serves as cofactor.

It is found in the cytoplasm. In terms of biological role, participates actively in the response to hyperosmotic and heat shock by preventing the aggregation of stress-denatured proteins and by disaggregating proteins, also in an autonomous, DnaK-independent fashion. Unfolded proteins bind initially to DnaJ; upon interaction with the DnaJ-bound protein, DnaK hydrolyzes its bound ATP, resulting in the formation of a stable complex. GrpE releases ADP from DnaK; ATP binding to DnaK triggers the release of the substrate protein, thus completing the reaction cycle. Several rounds of ATP-dependent interactions between DnaJ, DnaK and GrpE are required for fully efficient folding. Also involved, together with DnaK and GrpE, in the DNA replication of plasmids through activation of initiation proteins. This is Chaperone protein DnaJ from Nitrosococcus oceani (strain ATCC 19707 / BCRC 17464 / JCM 30415 / NCIMB 11848 / C-107).